We begin with the raw amino-acid sequence, 254 residues long: 5'-nucleotidase SurE (254 aa).

4 residues coordinate a divalent metal cation: Asp8, Asp9, Ser40, and Asn93.

This sequence belongs to the SurE nucleotidase family. A divalent metal cation serves as cofactor.

The protein localises to the cytoplasm. It carries out the reaction a ribonucleoside 5'-phosphate + H2O = a ribonucleoside + phosphate. Functionally, nucleotidase that shows phosphatase activity on nucleoside 5'-monophosphates. The chain is 5'-nucleotidase SurE from Rhizorhabdus wittichii (strain DSM 6014 / CCUG 31198 / JCM 15750 / NBRC 105917 / EY 4224 / RW1) (Sphingomonas wittichii).